We begin with the raw amino-acid sequence, 584 residues long: Pescadillo homolog (584 aa).

The required for 28S ribosomal RNA processing stretch occupies residues 1–54; it reads MGGLEKKKYERGSATNYITRNKARKKLQLSLPDFRRLCILKGIYPHEPKHKKKV. Residues 1 to 257 are sufficient for nucleolar localization; sequence MGGLEKKKYE…PKLEGQAQAE (257 aa). Lys98 carries the post-translational modification N6-acetyllysine. Positions 312 to 414 are sufficient for interaction with MAP1B; it reads RKKELEAQEK…LLLPVAEYFP (103 aa). In terms of domain architecture, BRCT spans 321-414; it reads KHKKLFEGLK…LLLPVAEYFP (94 aa). The interval 449–510 is disordered; it reads DPGHLEEEEE…EEKKPQVMAG (62 aa). A compositionally biased stretch (acidic residues) spans 454-489; sequence EEEEEEDEDDDNEGDVAAENEEEDVEVESEEEEEEE. A compositionally biased stretch (basic and acidic residues) spans 496–505; sequence EQHRLEEKKP. A Glycyl lysine isopeptide (Lys-Gly) (interchain with G-Cter in SUMO1); alternate cross-link involves residue Lys513. A Glycyl lysine isopeptide (Lys-Gly) (interchain with G-Cter in SUMO2); alternate cross-link involves residue Lys513. Residues 535-584 are required for 28S ribosomal RNA processing; that stretch reads MMKKREKYLYQKIMFGKRRKIREANKLAEKRKAHDDAVRSEKKAKRTRPV. Basic and acidic residues predominate over residues 560–575; sequence KLAEKRKAHDDAVRSE. Residues 560 to 584 form a disordered region; it reads KLAEKRKAHDDAVRSEKKAKRTRPV.

This sequence belongs to the pescadillo family. As to quaternary structure, component of the PeBoW complex, composed of BOP1, PES1 and WDR12. The complex is held together by BOP1, which interacts with PES1 via its N-terminal domain and with WDR12 via a high-affinity interaction between the seven-bladed beta-propeller domains of the 2 proteins. The PeBoW complex associates with the 66S pre-ribosome. The PeBoW complex also associates with DDX27, PES1 interacts directly with DDX27. Interacts with IRS1 and UBTF. May interact with MAP1B. In terms of processing, sumoylated. As to expression, ubiquitous. Highest levels appear to be found in tissues that contain a population of proliferating cells, such as ovary and testis. Also appears to be highly expressed in kidney and liver. In the brain expression is restricted to neural progenitor cells and postmitotic neurons. Highly expressed in malignant astrocytes.

The protein localises to the nucleus. The protein resides in the nucleolus. It localises to the nucleoplasm. Its subcellular location is the chromosome. Component of the PeBoW complex, which is required for maturation of 28S and 5.8S ribosomal RNAs and formation of the 60S ribosome. This Mus musculus (Mouse) protein is Pescadillo homolog (Pes1).